A 342-amino-acid chain; its full sequence is 6-hydroxytryprostatin B O-methyltransferase (342 aa).

Asp201 lines the S-adenosyl-L-methionine pocket. His244 functions as the Proton acceptor in the catalytic mechanism.

It belongs to the class I-like SAM-binding methyltransferase superfamily. Cation-independent O-methyltransferase family. Homodimer.

The enzyme catalyses 6-hydroxytryprostatin B + S-adenosyl-L-methionine = tryprostatin A + S-adenosyl-L-homocysteine + H(+). The protein operates within mycotoxin biosynthesis. 6-hydroxytryprostatin B O-methyltransferase; part of the gene cluster that mediates the biosynthesis of fumitremorgins, indole alkaloids that carry not only intriguing chemical structures, but also interesting biological and pharmacological activities. The biosynthesis of fumitremorgin-type alkaloids begins by condensation of the two amino acids L-tryptophan and L-proline to brevianamide F, catalyzed by the non-ribosomal peptide synthetase ftmA. Brevianamide F is then prenylated by the prenyltransferase ftmPT1/ftmB in the presence of dimethylallyl diphosphate, resulting in the formation of tryprostatin B. The three cytochrome P450 monooxygenases, ftmP450-1/ftmC, ftmP450-2/ftmE and ftmP450-3/FtmG, are responsible for the conversion of tryprostatin B to 6-hydroxytryprostatin B, tryprostatin A to fumitremorgin C and fumitremorgin C to 12,13-dihydroxyfumitremorgin C, respectively. The putative methyltransferase ftmMT/ftmD is expected for the conversion of 6-hydroxytryprostatin B to tryprostatin A. FtmPT2/FtmH catalyzes the prenylation of 12,13-dihydroxyfumitre-morgin C in the presence of dimethylallyl diphosphate, resulting in the formation of fumitremorgin B. Fumitremorgin B is further converted to verruculogen by ftmOx1/ftmF via the insertion of an endoperoxide bond between the two prenyl moieties. In some fungal species, verruculogen is further converted to fumitremorgin A, but the enzymes involved in this step have not been identified yet. This chain is 6-hydroxytryprostatin B O-methyltransferase, found in Aspergillus fumigatus (strain ATCC MYA-4609 / CBS 101355 / FGSC A1100 / Af293) (Neosartorya fumigata).